We begin with the raw amino-acid sequence, 576 residues long: Low-affinity glucose transporter HXT4 (576 aa).

The disordered stretch occupies residues Met1–Asn56. Topologically, residues Met1–Ser66 are cytoplasmic. The segment covering Glu25–Asn37 has biased composition (polar residues). Residues Lys38–Ser54 are compositionally biased toward basic and acidic residues. A Glycyl lysine isopeptide (Lys-Gly) (interchain with G-Cter in ubiquitin) cross-link involves residue Lys45. Residues Ala67–Trp87 traverse the membrane as a helical segment. The Extracellular segment spans residues Asp88 to Gly122. The helical transmembrane segment at Leu123–Gly143 threads the bilayer. Topologically, residues Asp144–Lys149 are cytoplasmic. A helical membrane pass occupies residues Met150–Ile170. Topologically, residues Asn171 to Arg180 are extracellular. The chain crosses the membrane as a helical span at residues Ile181–Val201. The Cytoplasmic segment spans residues Ser202–Arg207. Residues Gly208–Thr228 traverse the membrane as a helical segment. Residues Asn229–Arg242 are Extracellular-facing. A helical membrane pass occupies residues Val243–Pro263. Topologically, residues Glu264–Asp346 are cytoplasmic. A helical membrane pass occupies residues Asn347 to Glu363. Residues Asp364 to Ser369 lie on the Extracellular side of the membrane. A helical membrane pass occupies residues Ile370–Val387. The Cytoplasmic segment spans residues Glu388–Arg394. The chain crosses the membrane as a helical span at residues Cys395–Val415. Residues Thr416–Val437 lie on the Extracellular side of the membrane. An N-linked (GlcNAc...) asparagine glycan is attached at Asn425. The helical transmembrane segment at Phe438–Asn458 threads the bilayer. Residues Ser459–Gln475 are Cytoplasmic-facing. A helical membrane pass occupies residues Ala476–Ile496. Residue Asp497 is a topological domain, extracellular. A helical membrane pass occupies residues Phe498–Phe518. Residues Val519–Lys576 are Cytoplasmic-facing.

Belongs to the major facilitator superfamily. Sugar transporter (TC 2.A.1.1) family.

The protein resides in the cell membrane. Its activity is regulated as follows. Xylose uptake is strongly inhibited by glucose. Low-affinity glucose transporter. Can also transport xylose. The polypeptide is Low-affinity glucose transporter HXT4 (HXT4) (Saccharomyces cerevisiae (strain YJM789) (Baker's yeast)).